Consider the following 321-residue polypeptide: Lipoyl synthase (321 aa).

Positions 68, 73, 79, 94, 98, 101, and 308 each coordinate [4Fe-4S] cluster. The Radical SAM core domain occupies 80–297; the sequence is FNHGTATFMI…KAEAMAMGFT (218 aa).

Belongs to the radical SAM superfamily. Lipoyl synthase family. It depends on [4Fe-4S] cluster as a cofactor.

It is found in the cytoplasm. The enzyme catalyses [[Fe-S] cluster scaffold protein carrying a second [4Fe-4S](2+) cluster] + N(6)-octanoyl-L-lysyl-[protein] + 2 oxidized [2Fe-2S]-[ferredoxin] + 2 S-adenosyl-L-methionine + 4 H(+) = [[Fe-S] cluster scaffold protein] + N(6)-[(R)-dihydrolipoyl]-L-lysyl-[protein] + 4 Fe(3+) + 2 hydrogen sulfide + 2 5'-deoxyadenosine + 2 L-methionine + 2 reduced [2Fe-2S]-[ferredoxin]. The protein operates within protein modification; protein lipoylation via endogenous pathway; protein N(6)-(lipoyl)lysine from octanoyl-[acyl-carrier-protein]: step 2/2. Functionally, catalyzes the radical-mediated insertion of two sulfur atoms into the C-6 and C-8 positions of the octanoyl moiety bound to the lipoyl domains of lipoate-dependent enzymes, thereby converting the octanoylated domains into lipoylated derivatives. The protein is Lipoyl synthase of Pectobacterium atrosepticum (strain SCRI 1043 / ATCC BAA-672) (Erwinia carotovora subsp. atroseptica).